A 269-amino-acid polypeptide reads, in one-letter code: MPELPEVETSRRGIEPHLVGETILHAVVRNGRLRWPVSDEIHALSDKPILSVQRRAKYLLLELPDGWIIIHLGMSGSLRILPEERPAEKHDHVDLVMSNGKVLRYTDPRRFGAWLWTRELEGHNVLAHLGPEPLSDAFNGAYLREKCAKKKVAIKPWLMDNKLVVGVGNIYASESLFAAGIHPDRLASSLSEKECELLAQAIKAVLLRSIEQGGTTLRDFLQSDGKPGYFAQELQVYGREGEPCRVCGTPILAGKHAQRRTYWCRRCQK.

The active-site Schiff-base intermediate with DNA is the Pro2. Glu3 acts as the Proton donor in catalysis. The active-site Proton donor; for beta-elimination activity is Lys57. Residues His90, Arg109, and Lys150 each contribute to the DNA site. The segment at 235 to 269 (QVYGREGEPCRVCGTPILAGKHAQRRTYWCRRCQK) adopts an FPG-type zinc-finger fold. Arg259 functions as the Proton donor; for delta-elimination activity in the catalytic mechanism.

This sequence belongs to the FPG family. As to quaternary structure, monomer. It depends on Zn(2+) as a cofactor.

It carries out the reaction Hydrolysis of DNA containing ring-opened 7-methylguanine residues, releasing 2,6-diamino-4-hydroxy-5-(N-methyl)formamidopyrimidine.. The catalysed reaction is 2'-deoxyribonucleotide-(2'-deoxyribose 5'-phosphate)-2'-deoxyribonucleotide-DNA = a 3'-end 2'-deoxyribonucleotide-(2,3-dehydro-2,3-deoxyribose 5'-phosphate)-DNA + a 5'-end 5'-phospho-2'-deoxyribonucleoside-DNA + H(+). Its function is as follows. Involved in base excision repair of DNA damaged by oxidation or by mutagenic agents. Acts as a DNA glycosylase that recognizes and removes damaged bases. Has a preference for oxidized purines, such as 7,8-dihydro-8-oxoguanine (8-oxoG). Has AP (apurinic/apyrimidinic) lyase activity and introduces nicks in the DNA strand. Cleaves the DNA backbone by beta-delta elimination to generate a single-strand break at the site of the removed base with both 3'- and 5'-phosphates. In Cronobacter sakazakii (strain ATCC BAA-894) (Enterobacter sakazakii), this protein is Formamidopyrimidine-DNA glycosylase.